Reading from the N-terminus, the 185-residue chain is Ribosome-recycling factor (185 aa).

It belongs to the RRF family.

The protein localises to the cytoplasm. Its function is as follows. Responsible for the release of ribosomes from messenger RNA at the termination of protein biosynthesis. May increase the efficiency of translation by recycling ribosomes from one round of translation to another. In Bacillus cereus (strain G9842), this protein is Ribosome-recycling factor.